We begin with the raw amino-acid sequence, 900 residues long: Bifunctional uridylyltransferase/uridylyl-removing enzyme (900 aa).

The tract at residues 1 to 342 (MPQVDPELFD…PCEQPVQIQP (342 aa)) is uridylyltransferase. The segment at 343 to 705 (LNSRFQLRDG…TTQREFESGS (363 aa)) is uridylyl-removing. Residues 461–583 (VDAHTLNLIK…VGDQTHLDYL (123 aa)) enclose the HD domain. 2 ACT domains span residues 706-789 (QIFI…IIQR) and 816-891 (VLEV…DNGR).

This sequence belongs to the GlnD family. Mg(2+) is required as a cofactor.

The catalysed reaction is [protein-PII]-L-tyrosine + UTP = [protein-PII]-uridylyl-L-tyrosine + diphosphate. It carries out the reaction [protein-PII]-uridylyl-L-tyrosine + H2O = [protein-PII]-L-tyrosine + UMP + H(+). With respect to regulation, uridylyltransferase (UTase) activity is inhibited by glutamine, while glutamine activates uridylyl-removing (UR) activity. In terms of biological role, modifies, by uridylylation and deuridylylation, the PII regulatory proteins (GlnB and homologs), in response to the nitrogen status of the cell that GlnD senses through the glutamine level. Under low glutamine levels, catalyzes the conversion of the PII proteins and UTP to PII-UMP and PPi, while under higher glutamine levels, GlnD hydrolyzes PII-UMP to PII and UMP (deuridylylation). Thus, controls uridylylation state and activity of the PII proteins, and plays an important role in the regulation of nitrogen assimilation and metabolism. This is Bifunctional uridylyltransferase/uridylyl-removing enzyme from Pseudomonas aeruginosa (strain UCBPP-PA14).